A 492-amino-acid chain; its full sequence is Catalase isozyme 2 (492 aa).

Active-site residues include His-65 and Asn-138. A heme-binding site is contributed by Tyr-348.

It belongs to the catalase family. As to quaternary structure, homotetramer. It depends on heme as a cofactor.

The protein resides in the peroxisome. It carries out the reaction 2 H2O2 = O2 + 2 H2O. Functionally, occurs in almost all aerobically respiring organisms and serves to protect cells from the toxic effects of hydrogen peroxide. The protein is Catalase isozyme 2 (CAT2) of Gossypium hirsutum (Upland cotton).